The sequence spans 86 residues: Cell division topological specificity factor (86 aa).

It belongs to the MinE family.

In terms of biological role, prevents the cell division inhibition by proteins MinC and MinD at internal division sites while permitting inhibition at polar sites. This ensures cell division at the proper site by restricting the formation of a division septum at the midpoint of the long axis of the cell. This is Cell division topological specificity factor from Rhizobium etli (strain ATCC 51251 / DSM 11541 / JCM 21823 / NBRC 15573 / CFN 42).